A 217-amino-acid chain; its full sequence is Large ribosomal subunit protein uL3 (217 aa).

It belongs to the universal ribosomal protein uL3 family. Part of the 50S ribosomal subunit. Forms a cluster with proteins L14 and L19.

One of the primary rRNA binding proteins, it binds directly near the 3'-end of the 23S rRNA, where it nucleates assembly of the 50S subunit. The polypeptide is Large ribosomal subunit protein uL3 (Mycobacterium sp. (strain KMS)).